Here is a 365-residue protein sequence, read N- to C-terminus: tRNA-specific 2-thiouridylase MnmA (365 aa).

ATP contacts are provided by residues 6-13 (AMSGGVDS) and Met-32. The Nucleophile role is filled by Cys-101. Cysteines 101 and 199 form a disulfide. Gly-125 serves as a coordination point for ATP. Positions 148–150 (KDQ) are interaction with tRNA. Catalysis depends on Cys-199, which acts as the Cysteine persulfide intermediate.

It belongs to the MnmA/TRMU family.

It is found in the cytoplasm. It carries out the reaction S-sulfanyl-L-cysteinyl-[protein] + uridine(34) in tRNA + AH2 + ATP = 2-thiouridine(34) in tRNA + L-cysteinyl-[protein] + A + AMP + diphosphate + H(+). Its function is as follows. Catalyzes the 2-thiolation of uridine at the wobble position (U34) of tRNA, leading to the formation of s(2)U34. This is tRNA-specific 2-thiouridylase MnmA from Kineococcus radiotolerans (strain ATCC BAA-149 / DSM 14245 / SRS30216).